The chain runs to 210 residues: Inner membrane-spanning protein YciB (210 aa).

6 consecutive transmembrane segments (helical) span residues 12–32 (EVSP…FFFA), 53–73 (IFIA…VSWM), 78–98 (LPMM…LTLW), 115–135 (LFGA…GYVF), 153–173 (WGVF…SFST), and 175–195 (FWVA…TLAQ).

The protein belongs to the YciB family.

Its subcellular location is the cell inner membrane. Its function is as follows. Plays a role in cell envelope biogenesis, maintenance of cell envelope integrity and membrane homeostasis. The protein is Inner membrane-spanning protein YciB of Sinorhizobium medicae (strain WSM419) (Ensifer medicae).